The following is a 109-amino-acid chain: Large ribosomal subunit protein uL22 (109 aa).

Belongs to the universal ribosomal protein uL22 family. In terms of assembly, part of the 50S ribosomal subunit.

In terms of biological role, this protein binds specifically to 23S rRNA; its binding is stimulated by other ribosomal proteins, e.g. L4, L17, and L20. It is important during the early stages of 50S assembly. It makes multiple contacts with different domains of the 23S rRNA in the assembled 50S subunit and ribosome. Its function is as follows. The globular domain of the protein is located near the polypeptide exit tunnel on the outside of the subunit, while an extended beta-hairpin is found that lines the wall of the exit tunnel in the center of the 70S ribosome. The protein is Large ribosomal subunit protein uL22 of Leptothrix cholodnii (strain ATCC 51168 / LMG 8142 / SP-6) (Leptothrix discophora (strain SP-6)).